Reading from the N-terminus, the 439-residue chain is UDP-N-acetylglucosamine--peptide N-acetylglucosaminyltransferase stabilizing protein GtfB (439 aa).

It belongs to the GtfB family. In terms of assembly, interacts with glycosyltransferase GtfA (Gtf2); probably forms a heterotetramer with 2 subunits each of GtfA and GtfB. Part of the accessory SecA2/SecY2 protein translocation apparatus.

The protein localises to the cell membrane. It functions in the pathway protein modification; protein glycosylation. Its function is as follows. Required for the polymorphic O-glycosylation of the serine-rich repeat protein Fap1. A stabilizing protein that is part of the accessory SecA2/SecY2 system specifically required to export Fap1, a serine-rich fimbrial adhesin encoded upstream in the same operon. The GtfA-GtfB (Gtf1-Gtf2 in this bacteria) complex adds GlcNAc from UDP-GlcNAc to Fap1, attaching the first sugar residue. Cannot use not UDP-Glc as substrate. Stabilizes the glycosylation activity of GtfA, causing it to partially localize to the cellular membrane where it is more protease resistant. The protein is UDP-N-acetylglucosamine--peptide N-acetylglucosaminyltransferase stabilizing protein GtfB of Streptococcus parasanguinis.